The following is a 588-amino-acid chain: Probable G-protein coupled receptor 162 (588 aa).

At 1-17 the chain is on the extracellular side; it reads MARGGAGAEEASLRSNA. A helical membrane pass occupies residues 18-38; the sequence is LSWLACGLLALLANAWIILSI. Residues 39–49 lie on the Cytoplasmic side of the membrane; sequence SAKQQKHKPLE. Residues 50–70 form a helical membrane-spanning segment; that stretch reads LLLCFLAGTHILMAAVPLTTF. Residues 71–91 are Extracellular-facing; sequence AVVQLRRQASSDYDWNESICK. Residue N86 is glycosylated (N-linked (GlcNAc...) asparagine). A helical transmembrane segment spans residues 92-112; it reads VFVSTYYTLALATCFTVASLS. Topologically, residues 113 to 133 are cytoplasmic; it reads YHRMWMVRWPVNYRLSNAKKQ. Residues 134-154 form a helical membrane-spanning segment; sequence ALHAVMGIWMVSFILSTLPSI. Residues 155–174 are Extracellular-facing; the sequence is GWHNNGERYYARGCQFIVSK. Residues 175 to 195 form a helical membrane-spanning segment; that stretch reads IGLGFGVCFSLLLLGGIVMGL. Residues 196–275 lie on the Cytoplasmic side of the membrane; that stretch reads VCVAITFYQT…SLQVTNLVSA (80 aa). The helical transmembrane segment at 276–296 threads the bilayer; the sequence is IVFLYDSLTGVPILVVSFFSL. The Extracellular segment spans residues 297 to 303; it reads KSDSAPP. A helical transmembrane segment spans residues 304–324; that stretch reads WMVLAVLWCSMAQTLLLPSFI. The Cytoplasmic portion of the chain corresponds to 325–588; sequence WSCERYRADV…GNPIFPQLTL (264 aa). Phosphoserine is present on residues S413 and S435. 2 disordered regions span residues 445–474 and 511–550; these read QSRA…AEGG and ETPL…AVGL. Residues 530-546 are compositionally biased toward low complexity; that stretch reads PLGLSPRRLSLGSPESR.

It belongs to the G-protein coupled receptor 1 family.

Its subcellular location is the cell membrane. In terms of biological role, orphan receptor. This is Probable G-protein coupled receptor 162 (GPR162) from Homo sapiens (Human).